We begin with the raw amino-acid sequence, 191 residues long: Programmed cell death protein 6 (191 aa).

Position 2 is an N-acetylalanine (A2). EF-hand domains are found at residues 23–58, 59–89, 90–125, 126–161, and 162–191; these read PDQS…GTWT, PFNP…TGVW, KYIT…FGYR, LSDQ…LQRL, and TDIF…FSIV. The Ca(2+) site is built by D36, D38, S40, V42, and E47. Ca(2+) contacts are provided by D103, D105, S107, M109, and E114. Positions 169, 171, 173, and 175 each coordinate Mg(2+).

As to quaternary structure, homodimer and heterodimer; heterodimerizes (via the EF-hand 5) with PEF1. Isoform 1 and isoform 2 self-associate; probably forming homodimers. Interacts with CPNE4 (via VWFA domain). Interacts with PDCD6IP; the interaction is calcium-dependent. Interacts with RBM22. Interacts with PLSCR4. Interacts with ANXA7 and TSG101. Interacts with DAPK1. Interacts with SEC31A; the interaction is calcium-dependent and promotes monoubiquitination of SEC31A. Interacts with ANXA11 (via N-terminus); the interaction is calcium-dependent. Interacts with PLSCR3 (via N-terminus); the interaction is calcium-dependent. Interacts with MCOLN1; the interaction is calcium-dependent. Interacts with KDR; the interaction is calcium-dependent. Interacts with HEBP2; the interaction is calcium-dependent. Interacts with TFG. Isoform 1: Interacts with SHISA5, leading to stabilize it. Isoform 2: Does not interact with SHISA5. Isoform 2: Does not interact with PDCD6IP, TSG101, ANXA7 and ANXA11.

It is found in the endoplasmic reticulum membrane. The protein resides in the cytoplasmic vesicle. Its subcellular location is the COPII-coated vesicle membrane. It localises to the cytoplasm. The protein localises to the nucleus. It is found in the endosome. In terms of biological role, calcium sensor that plays a key role in processes such as endoplasmic reticulum (ER)-Golgi vesicular transport, endosomal biogenesis or membrane repair. Acts as an adapter that bridges unrelated proteins or stabilizes weak protein-protein complexes in response to calcium: calcium-binding triggers exposure of apolar surface, promoting interaction with different sets of proteins thanks to 3 different hydrophobic pockets, leading to translocation to membranes. Involved in ER-Golgi transport. Regulates ER-Golgi transport by promoting the association between PDCD6IP and TSG101, thereby bridging together the ESCRT-III and ESCRT-I complexes. Together with PEF1, acts as a calcium-dependent adapter for the BCR(KLHL12) complex, a complex involved in ER-Golgi transport by regulating the size of COPII coats. In response to cytosolic calcium increase, the heterodimer formed with PEF1 interacts with, and bridges together the BCR(KLHL12) complex and SEC31 (SEC31A or SEC31B), promoting monoubiquitination of SEC31 and subsequent collagen export, which is required for neural crest specification. Involved in the regulation of the distribution and function of MCOLN1 in the endosomal pathway. Promotes localization and polymerization of TFG at endoplasmic reticulum exit site. Required for T-cell receptor-, Fas-, and glucocorticoid-induced apoptosis. May mediate Ca(2+)-regulated signals along the death pathway: interaction with DAPK1 can accelerate apoptotic cell death by increasing caspase-3 activity. Its role in apoptosis may however be indirect, as suggested by knockout experiments. May inhibit KDR/VEGFR2-dependent angiogenesis; the function involves inhibition of VEGF-induced phosphorylation of the Akt signaling pathway. Has a lower Ca(2+) affinity than isoform 1. The polypeptide is Programmed cell death protein 6 (Rattus norvegicus (Rat)).